Consider the following 213-residue polypeptide: Orotate phosphoribosyltransferase (213 aa).

Lysine 26 serves as a coordination point for 5-phospho-alpha-D-ribose 1-diphosphate. 34 to 35 (FF) lines the orotate pocket. Residues 72–73 (YK), arginine 99, lysine 100, lysine 103, histidine 105, and 124–132 (DDVITAGTA) contribute to the 5-phospho-alpha-D-ribose 1-diphosphate site. 2 residues coordinate orotate: threonine 128 and arginine 156.

It belongs to the purine/pyrimidine phosphoribosyltransferase family. PyrE subfamily. In terms of assembly, homodimer. It depends on Mg(2+) as a cofactor.

The catalysed reaction is orotidine 5'-phosphate + diphosphate = orotate + 5-phospho-alpha-D-ribose 1-diphosphate. It functions in the pathway pyrimidine metabolism; UMP biosynthesis via de novo pathway; UMP from orotate: step 1/2. Functionally, catalyzes the transfer of a ribosyl phosphate group from 5-phosphoribose 1-diphosphate to orotate, leading to the formation of orotidine monophosphate (OMP). This Shigella dysenteriae serotype 1 (strain Sd197) protein is Orotate phosphoribosyltransferase.